A 295-amino-acid polypeptide reads, in one-letter code: 4-diphosphocytidyl-2-C-methyl-D-erythritol kinase (295 aa).

Lys-10 is an active-site residue. 97 to 107 (PIGSGLGGASS) is a binding site for ATP. Asp-139 is a catalytic residue.

This sequence belongs to the GHMP kinase family. IspE subfamily. Homodimer.

It carries out the reaction 4-CDP-2-C-methyl-D-erythritol + ATP = 4-CDP-2-C-methyl-D-erythritol 2-phosphate + ADP + H(+). It participates in isoprenoid biosynthesis; isopentenyl diphosphate biosynthesis via DXP pathway; isopentenyl diphosphate from 1-deoxy-D-xylulose 5-phosphate: step 3/6. Functionally, catalyzes the phosphorylation of the position 2 hydroxy group of 4-diphosphocytidyl-2C-methyl-D-erythritol. In Blochmanniella pennsylvanica (strain BPEN), this protein is 4-diphosphocytidyl-2-C-methyl-D-erythritol kinase.